A 273-amino-acid chain; its full sequence is Urease accessory protein UreD (273 aa).

It belongs to the UreD family. As to quaternary structure, ureD, UreF and UreG form a complex that acts as a GTP-hydrolysis-dependent molecular chaperone, activating the urease apoprotein by helping to assemble the nickel containing metallocenter of UreC. The UreE protein probably delivers the nickel.

The protein localises to the cytoplasm. Its function is as follows. Required for maturation of urease via the functional incorporation of the urease nickel metallocenter. The sequence is that of Urease accessory protein UreD from Rhizobium leguminosarum bv. trifolii (strain WSM2304).